The sequence spans 167 residues: Lipoprotein signal peptidase (167 aa).

Helical transmembrane passes span 10–30, 68–88, and 98–118; these read LIWLLLSAVVIGLDQWSKAWV, WQLWFFTALAVGISGLLAFWL, and SAVPYALVIGGAIGNVIDRLM. Catalysis depends on residues D124 and D142. A helical membrane pass occupies residues 138–158; sequence FNIADSAIVGGAIGIALFGLF.

Belongs to the peptidase A8 family.

It localises to the cell inner membrane. The catalysed reaction is Release of signal peptides from bacterial membrane prolipoproteins. Hydrolyzes -Xaa-Yaa-Zaa-|-(S,diacylglyceryl)Cys-, in which Xaa is hydrophobic (preferably Leu), and Yaa (Ala or Ser) and Zaa (Gly or Ala) have small, neutral side chains.. It participates in protein modification; lipoprotein biosynthesis (signal peptide cleavage). In terms of biological role, this protein specifically catalyzes the removal of signal peptides from prolipoproteins. The chain is Lipoprotein signal peptidase from Xanthomonas campestris pv. campestris (strain 8004).